The following is a 94-amino-acid chain: ESAT-6-like protein EsxI (94 aa).

This sequence belongs to the WXG100 family. ESAT-6 subfamily.

It localises to the secreted. This is ESAT-6-like protein EsxI from Mycobacterium bovis (strain ATCC BAA-935 / AF2122/97).